A 63-amino-acid polypeptide reads, in one-letter code: Omega-conotoxin Eu1.6 (63 aa).

Residues 1–21 (MGMRMMFTVFLLVVLATTVVS) form the signal peptide. Positions 22–47 (FTSDRAPDGRNAAAKAFGLITPTVRK) are excised as a propeptide. Disulfide bonds link C49–C55 and C50–C63. The interval 51 to 53 (SNP) is ser-Xaa-Pro motif, crucial for potent interaction with nAChR.

It belongs to the conotoxin A superfamily. In terms of tissue distribution, expressed by the venom duct.

The protein localises to the secreted. In terms of biological role, this amidated peptide potently and teversibly inhibits Cav2.2/CACNA1B. Steady-state inactivation is enhanced at hyperpolarized membrane potentials. Also shows a weak interaction at alpha-3-beta-4/ CHRNA3-CHRNB4 and alpha-7/CHRNA7 nAChRs subtypes. In vivo, exhibits a potent analgesic activity in rat partial sciatic nerve injury and chronic constriction injury models. In Conus eburneus (Ivory cone), this protein is Omega-conotoxin Eu1.6.